A 353-amino-acid chain; its full sequence is tRNA-specific 2-thiouridylase MnmA 2 (353 aa).

ATP-binding positions include Ala-9–Ser-16 and Met-35. The Nucleophile role is filled by Cys-98. Cys-98 and Cys-194 are joined by a disulfide. Gly-122 contacts ATP. Residues Lys-144–Gln-146 are interaction with tRNA. Residue Cys-194 is the Cysteine persulfide intermediate of the active site. The interval Arg-300–Tyr-301 is interaction with tRNA.

The protein belongs to the MnmA/TRMU family.

It is found in the cytoplasm. It carries out the reaction S-sulfanyl-L-cysteinyl-[protein] + uridine(34) in tRNA + AH2 + ATP = 2-thiouridine(34) in tRNA + L-cysteinyl-[protein] + A + AMP + diphosphate + H(+). Functionally, catalyzes the 2-thiolation of uridine at the wobble position (U34) of tRNA, leading to the formation of s(2)U34. This chain is tRNA-specific 2-thiouridylase MnmA 2, found in Clostridium botulinum (strain Langeland / NCTC 10281 / Type F).